The sequence spans 189 residues: 3-isopropylmalate dehydratase small subunit (189 aa).

It belongs to the LeuD family. LeuD type 1 subfamily. Heterodimer of LeuC and LeuD.

It carries out the reaction (2R,3S)-3-isopropylmalate = (2S)-2-isopropylmalate. Its pathway is amino-acid biosynthesis; L-leucine biosynthesis; L-leucine from 3-methyl-2-oxobutanoate: step 2/4. Catalyzes the isomerization between 2-isopropylmalate and 3-isopropylmalate, via the formation of 2-isopropylmaleate. This is 3-isopropylmalate dehydratase small subunit from Francisella tularensis subsp. holarctica (strain FTNF002-00 / FTA).